Consider the following 457-residue polypeptide: Argininosuccinate lyase (457 aa).

It belongs to the lyase 1 family. Argininosuccinate lyase subfamily.

It is found in the cytoplasm. It carries out the reaction 2-(N(omega)-L-arginino)succinate = fumarate + L-arginine. It functions in the pathway amino-acid biosynthesis; L-arginine biosynthesis; L-arginine from L-ornithine and carbamoyl phosphate: step 3/3. This Bacillus pumilus (strain SAFR-032) protein is Argininosuccinate lyase.